A 417-amino-acid polypeptide reads, in one-letter code: Biofilm dispersion protein BdlA (417 aa).

The PAS 1 domain maps to methionine 1–glycine 66. One can recognise a PAC 1 domain in the interval glutamate 67–histidine 114. Residues glutamine 115 to glycine 188 form the PAS 2 domain. In terms of domain architecture, PAC 2 spans valine 191 to glutamate 241. The Methyl-accepting transducer domain maps to alanine 242 to leucine 417.

Its function is as follows. Essential for biofilm dispersion by sensing environmental cues. May be involved in sensing and transducing signals within cells, resulting in the modulation of c-di-GMP levels, swimming motility and adhesiveness of the bacterial cell surface. The polypeptide is Biofilm dispersion protein BdlA (bdlA) (Pseudomonas aeruginosa (strain ATCC 15692 / DSM 22644 / CIP 104116 / JCM 14847 / LMG 12228 / 1C / PRS 101 / PAO1)).